Reading from the N-terminus, the 234-residue chain is Phosphoribosylaminoimidazole-succinocarboxamide synthase (234 aa).

The protein belongs to the SAICAR synthetase family.

It catalyses the reaction 5-amino-1-(5-phospho-D-ribosyl)imidazole-4-carboxylate + L-aspartate + ATP = (2S)-2-[5-amino-1-(5-phospho-beta-D-ribosyl)imidazole-4-carboxamido]succinate + ADP + phosphate + 2 H(+). It functions in the pathway purine metabolism; IMP biosynthesis via de novo pathway; 5-amino-1-(5-phospho-D-ribosyl)imidazole-4-carboxamide from 5-amino-1-(5-phospho-D-ribosyl)imidazole-4-carboxylate: step 1/2. The chain is Phosphoribosylaminoimidazole-succinocarboxamide synthase from Streptococcus pyogenes serotype M18 (strain MGAS8232).